A 533-amino-acid chain; its full sequence is T-complex protein 1 subunit delta (533 aa).

The segment at 1 to 24 (MVVKPAARGMKPQGQAYKDKSKPA) is disordered.

This sequence belongs to the TCP-1 chaperonin family. Heterooligomeric complex of about 850 to 900 kDa that forms two stacked rings, 12 to 16 nm in diameter.

The protein localises to the cytoplasm. In terms of biological role, molecular chaperone; assists the folding of proteins upon ATP hydrolysis. Known to play a role, in vitro, in the folding of actin and tubulin. This is T-complex protein 1 subunit delta from Ochlerotatus triseriatus (Eastern treehole mosquito).